Reading from the N-terminus, the 226-residue chain is 2-C-methyl-D-erythritol 4-phosphate cytidylyltransferase (226 aa).

It belongs to the IspD/TarI cytidylyltransferase family. IspD subfamily.

The catalysed reaction is 2-C-methyl-D-erythritol 4-phosphate + CTP + H(+) = 4-CDP-2-C-methyl-D-erythritol + diphosphate. The protein operates within isoprenoid biosynthesis; isopentenyl diphosphate biosynthesis via DXP pathway; isopentenyl diphosphate from 1-deoxy-D-xylulose 5-phosphate: step 2/6. Its function is as follows. Catalyzes the formation of 4-diphosphocytidyl-2-C-methyl-D-erythritol from CTP and 2-C-methyl-D-erythritol 4-phosphate (MEP). In Clostridium beijerinckii (strain ATCC 51743 / NCIMB 8052) (Clostridium acetobutylicum), this protein is 2-C-methyl-D-erythritol 4-phosphate cytidylyltransferase.